A 591-amino-acid polypeptide reads, in one-letter code: Aspartate--tRNA ligase (591 aa).

L-aspartate is bound at residue E171. Residues 195–198 are aspartate; that stretch reads QLFK. R217 provides a ligand contact to L-aspartate. ATP contacts are provided by residues 217–219 and Q226; that span reads RDE. H448 provides a ligand contact to L-aspartate. An ATP-binding site is contributed by E482. Residue R489 coordinates L-aspartate. 534–537 serves as a coordination point for ATP; sequence GLDR.

Belongs to the class-II aminoacyl-tRNA synthetase family. Type 1 subfamily. As to quaternary structure, homodimer.

It localises to the cytoplasm. It catalyses the reaction tRNA(Asp) + L-aspartate + ATP = L-aspartyl-tRNA(Asp) + AMP + diphosphate. Catalyzes the attachment of L-aspartate to tRNA(Asp) in a two-step reaction: L-aspartate is first activated by ATP to form Asp-AMP and then transferred to the acceptor end of tRNA(Asp). The polypeptide is Aspartate--tRNA ligase (Aliivibrio fischeri (strain MJ11) (Vibrio fischeri)).